The following is an 859-amino-acid chain: MRASLENGDDHDAHRLVDAGFRPPGRPRAARRRAFARARRGERRARGTAEDRHDVPGAEQPVLRDDAKGARRGGRVDRRAGDRHRRASRREQAGERRRGHAAEEDRHPAREPDRFDGHPVGRRVGEEGGRRRRRGGRERERPGRRVRRLEEFRRGRDVVRLPREGDRRRRRSRDPRRHPGRADSRARARLPRGAREIPEREDRRRAERQAGARERARRHREHDPGAPVAQGRLQRQRRRLDGRAVRDRGVGPRHQAHERRRRAGGDRGDAEAELEVHRDVRAVPARPDSPRDRHRAREEVGRQCAEGDSGRREADRQGQREDVQLVSGPRDEADDMDEASGAARAPDEASEEAMDTILALTGITKRFPGVVALRGIDLRVARGEIHALLGENGAGKSTLMKILCGIHPPDEGVIALDGEPRRFANHHDAIAAGVGIVFQEFSLIPELNAVDNLFLGREWRGRLGLRERARMRRAAADIFARLDVAIDLSAPVRELSVAQQQFVEIGKALSLDARLLILDEPTATLTPAEAAHLFGVMRELKRRGVAMIFISHHLDEIFEVCDRITVLRDGQYVGTTEVARTDVGALVEMMVGRRIEQSFPPKPRLARDAAPVLEVDALQVRENGPVNRFALREGEILGFAGLVGSGRTSSALALIGAKPARVRRMRVRGRPVCLADPAAALAAGIGLLPESRKTQGLIPAFSIRHNIAINNLGKHRRLRWFVDAAAETRTTLELMQRLGVKAPTPHTRVDTLSGGNQQKVVIARWLNHHTRILIFDEPTRGIDIGAKAEIYQLMRELSARGYSIVLISSELPEIVGLCDRVAVFRQGRIEAMLEGEAIEPNTVMTYATSDVRGANHEHA.

Residues 1–351 (MRASLENGDD…AARAPDEASE (351 aa)) are disordered. The tract at residues 1 to 353 (MRASLENGDD…RAPDEASEEA (353 aa)) is unknown. Residues 8-17 (GDDHDAHRLV) show a composition bias toward basic and acidic residues. Residues 28-43 (RAARRRAFARARRGER) are compositionally biased toward basic residues. Basic and acidic residues-rich tracts occupy residues 44–80 (RARG…DRRA), 89–129 (RREQ…EEGG), and 137–167 (RERE…EGDR). Residues 168 to 179 (RRRRSRDPRRHP) are compositionally biased toward basic residues. Basic and acidic residues-rich tracts occupy residues 193–214 (GARE…GARE), 239–250 (RLDGRAVRDRGV), 263–281 (AGGD…RDVR), 288–301 (DSPR…EEVG), and 308–323 (DSGR…REDV). 2 consecutive ABC transporter domains span residues 358-594 (LALT…VGRR) and 607-851 (RDAA…TSDV). 390 to 397 (GENGAGKS) is a binding site for ATP.

The protein belongs to the ABC transporter superfamily. Ribose importer (TC 3.A.1.2.1) family. In terms of assembly, the complex is composed of an ATP-binding protein (RbsA), two transmembrane proteins (RbsC) and a solute-binding protein (RbsB).

It is found in the cell inner membrane. It catalyses the reaction D-ribose(out) + ATP + H2O = D-ribose(in) + ADP + phosphate + H(+). Part of the ABC transporter complex RbsABC involved in ribose import. Responsible for energy coupling to the transport system. This Burkholderia pseudomallei (strain 1710b) protein is Ribose import ATP-binding protein RbsA 1.